The following is a 282-amino-acid chain: Large ribosomal subunit protein uL2 (282 aa).

Disordered regions lie at residues 31 to 56 and 226 to 282; these read EKSLLDSQSHSAGRNNAGKMTVRHRG and SVMN…GSKM. Polar residues predominate over residues 35 to 44; it reads LDSQSHSAGR. Residues 257 to 266 show a composition bias toward basic residues; that stretch reads TVGKKTRSKK.

Belongs to the universal ribosomal protein uL2 family. Part of the 50S ribosomal subunit. Forms a bridge to the 30S subunit in the 70S ribosome.

One of the primary rRNA binding proteins. Required for association of the 30S and 50S subunits to form the 70S ribosome, for tRNA binding and peptide bond formation. It has been suggested to have peptidyltransferase activity; this is somewhat controversial. Makes several contacts with the 16S rRNA in the 70S ribosome. The chain is Large ribosomal subunit protein uL2 from Levilactobacillus brevis (strain ATCC 367 / BCRC 12310 / CIP 105137 / JCM 1170 / LMG 11437 / NCIMB 947 / NCTC 947) (Lactobacillus brevis).